We begin with the raw amino-acid sequence, 392 residues long: DNA primase small subunit PriS (392 aa).

Active-site residues include Asp98, Asp100, and Asp295.

Belongs to the eukaryotic-type primase small subunit family. As to quaternary structure, heterodimer of a small subunit (PriS) and a large subunit (PriL). Mg(2+) serves as cofactor. The cofactor is Mn(2+).

Catalytic subunit of DNA primase, an RNA polymerase that catalyzes the synthesis of short RNA molecules used as primers for DNA polymerase during DNA replication. The small subunit contains the primase catalytic core and has DNA synthesis activity on its own. Binding to the large subunit stabilizes and modulates the activity, increasing the rate of DNA synthesis while decreasing the length of the DNA fragments, and conferring RNA synthesis capability. The DNA polymerase activity may enable DNA primase to also catalyze primer extension after primer synthesis. May also play a role in DNA repair. The polypeptide is DNA primase small subunit PriS (Haloarcula marismortui (strain ATCC 43049 / DSM 3752 / JCM 8966 / VKM B-1809) (Halobacterium marismortui)).